The chain runs to 405 residues: Magnesium-protoporphyrin IX monomethyl ester [oxidative] cyclase, chloroplastic (405 aa).

The transit peptide at 1 to 44 (MAAEMALVKPITPKFINPMRTFSSSSKFSTIKMSATSQSNTTTT) directs the protein to the chloroplast. Low complexity predominate over residues 33–47 (MSATSQSNTTTTATK). The segment at 33-54 (MSATSQSNTTTTATKPSKKGNK) is disordered.

Belongs to the AcsF family. Fe cation serves as cofactor.

It is found in the plastid. The protein localises to the chloroplast. It carries out the reaction Mg-protoporphyrin IX 13-monomethyl ester + 3 NADPH + 3 O2 + 2 H(+) = 3,8-divinyl protochlorophyllide a + 3 NADP(+) + 5 H2O. Its pathway is porphyrin-containing compound metabolism; chlorophyll biosynthesis. Functionally, catalyzes the formation of the isocyclic ring in chlorophyll biosynthesis. Mediates the cyclase reaction, which results in the formation of divinylprotochlorophyllide (Pchlide) characteristic of all chlorophylls from magnesium-protoporphyrin IX 13-monomethyl ester (MgPMME). In Euphorbia esula (Leafy spurge), this protein is Magnesium-protoporphyrin IX monomethyl ester [oxidative] cyclase, chloroplastic (CRD1).